A 305-amino-acid chain; its full sequence is Probable 5-dehydro-4-deoxyglucarate dehydratase (305 aa).

This sequence belongs to the DapA family.

It catalyses the reaction 5-dehydro-4-deoxy-D-glucarate + H(+) = 2,5-dioxopentanoate + CO2 + H2O. Its pathway is carbohydrate acid metabolism; D-glucarate degradation; 2,5-dioxopentanoate from D-glucarate: step 2/2. The protein is Probable 5-dehydro-4-deoxyglucarate dehydratase of Pseudomonas entomophila (strain L48).